The following is a 461-amino-acid chain: B3 domain-containing protein REM9 (461 aa).

The TF-B3 1 DNA-binding region spans 11–103 (NQHFFQPLLP…VFHVTALGPS (93 aa)). The interval 110–146 (PQSSRHEEGEESGENEISEKEGEENVQKESDKSSSDL) is disordered. The segment covering 126-143 (ISEKEGEENVQKESDKSS) has biased composition (basic and acidic residues). 2 consecutive DNA-binding regions (TF-B3) follow at residues 148–244 (CFSQ…CSRT) and 230–332 (LQKA…EQPS). The interval 333-415 (FKAEDGRHKR…SGIEGNLQHT (83 aa)) is disordered. Over residues 384 to 394 (PKVEIREKIAE) the composition is skewed to basic and acidic residues. Over residues 400–415 (RASNKSSGIEGNLQHT) the composition is skewed to polar residues.

It localises to the nucleus. The polypeptide is B3 domain-containing protein REM9 (REM9) (Arabidopsis thaliana (Mouse-ear cress)).